We begin with the raw amino-acid sequence, 557 residues long: NADP-dependent malic enzyme (557 aa).

Tyr91 functions as the Proton donor in the catalytic mechanism. Arg144 contacts NADP(+). Residues Arg144 and Lys162 each contribute to the substrate site. Residue Lys162 is the Proton acceptor of the active site. 2 residues coordinate Mn(2+): Glu234 and Asp235. Asn238 lines the NADP(+) pocket. Asp258 contacts Mn(2+). NADP(+)-binding positions include 291-294, Ser325, Asn397, and Asn443; that span reads AGEA. Asn443 is a binding site for substrate.

It belongs to the malic enzymes family. As to quaternary structure, homotetramer. Mg(2+) serves as cofactor. The cofactor is Mn(2+). The N-terminus is blocked.

Its subcellular location is the cytoplasm. It carries out the reaction (S)-malate + NADP(+) = pyruvate + CO2 + NADPH. The enzyme catalyses oxaloacetate + H(+) = pyruvate + CO2. The chain is NADP-dependent malic enzyme (ME1) from Columba livia (Rock dove).